We begin with the raw amino-acid sequence, 421 residues long: UDP-N-acetylglucosamine 1-carboxyvinyltransferase (421 aa).

Phosphoenolpyruvate is bound at residue 22–23; sequence KN. Arg93 serves as a coordination point for UDP-N-acetyl-alpha-D-glucosamine. Catalysis depends on Cys117, which acts as the Proton donor. Cys117 is modified (2-(S-cysteinyl)pyruvic acid O-phosphothioketal). UDP-N-acetyl-alpha-D-glucosamine contacts are provided by residues 122-126, Asp308, and Ile330; that span reads RPVDL.

This sequence belongs to the EPSP synthase family. MurA subfamily.

It localises to the cytoplasm. It carries out the reaction phosphoenolpyruvate + UDP-N-acetyl-alpha-D-glucosamine = UDP-N-acetyl-3-O-(1-carboxyvinyl)-alpha-D-glucosamine + phosphate. It participates in cell wall biogenesis; peptidoglycan biosynthesis. In terms of biological role, cell wall formation. Adds enolpyruvyl to UDP-N-acetylglucosamine. This chain is UDP-N-acetylglucosamine 1-carboxyvinyltransferase, found in Pseudomonas fluorescens (strain Pf0-1).